A 187-amino-acid polypeptide reads, in one-letter code: Ribosome maturation factor RimP (187 aa).

This sequence belongs to the RimP family.

Its subcellular location is the cytoplasm. Required for maturation of 30S ribosomal subunits. In Phenylobacterium zucineum (strain HLK1), this protein is Ribosome maturation factor RimP.